A 398-amino-acid chain; its full sequence is 2-epi-5-epi-valiolone synthase (398 aa).

NAD(+)-binding positions include Asp-62, 93–96 (ETVK), 126–130 (GVLMD), 150–151 (TT), Lys-163, Lys-172, and 190–193 (FLAT). Lys-163 is an active-site residue. A divalent metal cation is bound by residues Glu-205, His-276, and His-292.

This sequence belongs to the sugar phosphate cyclases superfamily. EEVS family. Requires NAD(+) as cofactor. Co(2+) serves as cofactor.

The enzyme catalyses D-sedoheptulose 7-phosphate = 2-epi-5-epi-valiolone + phosphate. Catalyzes the cyclization of D-sedoheptulose 7-phosphate to 2-epi-5-epi-valiolone. Does not use ido-heptulose 7-phosphate and 3-deoxy-arabino-heptulosonate 7-phosphate. Involved in the biosynthesis of the acarviose moiety of the alpha-glucosidase inhibitor acarbose. The polypeptide is 2-epi-5-epi-valiolone synthase (Actinoplanes sp. (strain ATCC 31044 / CBS 674.73 / SE50/110)).